A 208-amino-acid polypeptide reads, in one-letter code: MNRKQIAKGKLVRRFGINIFEQPKYDKILKKKPHPPGMHGKARKAKITEYGKQLIEKQKIKFTYGVSERQLTNTFKEAKKHHGVTGDNLLSILERRIDNVVYRAGFAISRAHARQIVSHGIIILNGRRVTIPSIILRANDQIQIKEKDSLKKLIRSNIEKTSSLRNLPTWIEVNADDLNIKVKHAPSRDEIPTLANEQMVVEYYSKRA.

The S4 RNA-binding domain occupies 95–157 (RRIDNVVYRA…DSLKKLIRSN (63 aa)).

This sequence belongs to the universal ribosomal protein uS4 family. Part of the 30S ribosomal subunit. Contacts protein S5. The interaction surface between S4 and S5 is involved in control of translational fidelity.

Its function is as follows. One of the primary rRNA binding proteins, it binds directly to 16S rRNA where it nucleates assembly of the body of the 30S subunit. Functionally, with S5 and S12 plays an important role in translational accuracy. This Borreliella burgdorferi (strain ATCC 35210 / DSM 4680 / CIP 102532 / B31) (Borrelia burgdorferi) protein is Small ribosomal subunit protein uS4.